Here is a 121-residue protein sequence, read N- to C-terminus: Large ribosomal subunit protein uL18 (121 aa).

This sequence belongs to the universal ribosomal protein uL18 family. As to quaternary structure, part of the 50S ribosomal subunit; part of the 5S rRNA/L5/L18/L25 subcomplex. Contacts the 5S and 23S rRNAs.

In terms of biological role, this is one of the proteins that bind and probably mediate the attachment of the 5S RNA into the large ribosomal subunit, where it forms part of the central protuberance. This Paracidovorax citrulli (strain AAC00-1) (Acidovorax citrulli) protein is Large ribosomal subunit protein uL18.